A 317-amino-acid chain; its full sequence is Sulfate adenylyltransferase subunit 2 (317 aa).

Disordered regions lie at residues 1–21 and 298–317; these read MPDS…APLD and RAID…EGYF.

It belongs to the PAPS reductase family. CysD subfamily. As to quaternary structure, heterodimer composed of CysD, the smaller subunit, and CysN.

The enzyme catalyses sulfate + ATP + H(+) = adenosine 5'-phosphosulfate + diphosphate. It functions in the pathway sulfur metabolism; hydrogen sulfide biosynthesis; sulfite from sulfate: step 1/3. Its function is as follows. With CysN forms the ATP sulfurylase (ATPS) that catalyzes the adenylation of sulfate producing adenosine 5'-phosphosulfate (APS) and diphosphate, the first enzymatic step in sulfur assimilation pathway. APS synthesis involves the formation of a high-energy phosphoric-sulfuric acid anhydride bond driven by GTP hydrolysis by CysN coupled to ATP hydrolysis by CysD. This chain is Sulfate adenylyltransferase subunit 2, found in Rhizobium johnstonii (strain DSM 114642 / LMG 32736 / 3841) (Rhizobium leguminosarum bv. viciae).